A 187-amino-acid polypeptide reads, in one-letter code: Protein lethal(2)essential for life (187 aa).

One can recognise a sHSP domain in the interval 61-170 (NSLQKQESGS…TERLVQITQT (110 aa)). The segment at 151–187 (APMKALPPPQTERLVQITQTGPSSKEDNAKKVETSTA) is disordered. Residues 174-187 (SKEDNAKKVETSTA) are compositionally biased toward basic and acidic residues.

It belongs to the small heat shock protein (HSP20) family. In terms of tissue distribution, ubiquitously expressed during embryogenesis with no sign of tissue specificity in expression up to stage 16.

Vital role in embryonic development. The protein is Protein lethal(2)essential for life (l(2)efl) of Drosophila melanogaster (Fruit fly).